Reading from the N-terminus, the 732-residue chain is Acylamino-acid-releasing enzyme (732 aa).

Met-1 bears the N-acetylmethionine mark. Ser-187 carries the phosphoserine modification. Residues Ser-587, Asp-675, and His-707 each act as charge relay system in the active site.

It belongs to the peptidase S9C family. In terms of assembly, homotetramer. As to expression, expressed in the liver (at protein level).

It localises to the cytoplasm. It catalyses the reaction Cleavage of an N-acetyl or N-formyl amino acid from the N-terminus of a polypeptide.. With respect to regulation, homotetramerization is required for activity. Tetramerization results in the formation of a gated channel which is involved in substrate selection and substrate access to the catalytic sites. In terms of biological role, this enzyme catalyzes the hydrolysis of the N-terminal peptide bond of an N-acetylated peptide to generate an N-acetylated amino acid and a peptide with a free N-terminus. It preferentially cleaves off Ac-Ala, Ac-Met and Ac-Ser. Also, involved in the degradation of oxidized and glycated proteins. The chain is Acylamino-acid-releasing enzyme (APEH) from Sus scrofa (Pig).